The following is a 119-amino-acid chain: Large ribosomal subunit protein bL20 (119 aa).

It belongs to the bacterial ribosomal protein bL20 family.

Binds directly to 23S ribosomal RNA and is necessary for the in vitro assembly process of the 50S ribosomal subunit. It is not involved in the protein synthesizing functions of that subunit. The polypeptide is Large ribosomal subunit protein bL20 (Aromatoleum aromaticum (strain DSM 19018 / LMG 30748 / EbN1) (Azoarcus sp. (strain EbN1))).